Consider the following 59-residue polypeptide: Large ribosomal subunit protein bL32 (59 aa).

Positions 1-25 (MAVQQNKKSPSKRGMHRAHDFLTAP) are disordered.

The protein belongs to the bacterial ribosomal protein bL32 family.

This Azoarcus sp. (strain BH72) protein is Large ribosomal subunit protein bL32.